Consider the following 72-residue polypeptide: MNKKTLLVIFFVTMLIVDEVNSFRFGSFLKKVWKSKLAKKLRSKGKQLLKDYANKVLNGPEEEAAAPAERRR.

The signal sequence occupies residues 1–22; the sequence is MNKKTLLVIFFVTMLIVDEVNS. The propeptide occupies 70 to 72; the sequence is RRR.

This sequence belongs to the non-disulfide-bridged peptide (NDBP) superfamily. Long chain multifunctional peptide (group 2) family. In terms of tissue distribution, expressed by the venom gland.

It is found in the secreted. Amphipathic peptide that shows bradykinin potentiating activity and antimicrobial activities against bacteria and fungi. Has higher antibacterial activities against Gram-negative than against Gram-positive bacteria. Also inhibits NADPH oxidase-dependent superoxide production (IC(50) is 0.4 uM on granulocytes stimulated with PMA, IC(50) is 0.51 uM on HL-60 cells undifferentiated and IC(50) is 0.53 uM on HL-60 cells treated with DMSO). The C-terminal peptide shows a higher bradykinin potentiating activity than the complete peptide. The chain is Bradykinin-potentiating peptide BmKbpp from Olivierus martensii (Manchurian scorpion).